The chain runs to 387 residues: Protein disulfide isomerase pTAC5, chloroplastic (387 aa).

A chloroplast-targeting transit peptide spans 1–40 (MASSSLPLSLPFPLRSLTSTTRSLPFQCSPLFFSIPSSIV). 2 coiled-coil regions span residues 72-106 (EQRWIRERESLLQEISDLQLRIQSLESRNSQLGNS) and 143-163 (REQIVEEVEEEEKRVIIAEEK). The segment at 318-387 (PVDRSESTNT…CDVCDGKKNL (70 aa)) adopts a CR-type zinc-finger fold.

In terms of assembly, interacts with HSP21; the formed complex associates with the plastid-encoded RNA polymerase (PEP) complex not only during transcription initiation, but also during elongation and termination, and with a stronger efficiency in illuminated chloroplasts. Binds to promoter regions of PEP-dependent genes, especially after a heat stress. Interacts with FLN2.

The protein localises to the plastid. It localises to the chloroplast stroma. The protein resides in the chloroplast nucleoid. The catalysed reaction is Catalyzes the rearrangement of -S-S- bonds in proteins.. Functionally, exhibits zinc-dependent disulfide isomerase activity. Required for seedling and chloroplast development under heat stress, probably by maintaining plastid-encoded RNA polymerase (PEP)-dependent transcription. The polypeptide is Protein disulfide isomerase pTAC5, chloroplastic (Arabidopsis thaliana (Mouse-ear cress)).